The following is a 365-amino-acid chain: MDRRSFITKAAVGGAAASALAAPALAQSAPKVTWRLASSFPKSLDTIFGGAEVLSKMLSEATDGNFQIQVFSAGELVPGLQAADAVTEGTVECCHTVGYYYWGKDPTFALAAAVPFSLSARGINAWHYHGGGIDLYNEFLSQHNIVAFPGGNTGVQMGGWFRREINTVADMQGLKMRVGGFAGKVMERLGVVPQQIAGGDIYPALEKGTIDATEWVGPYDDEKLGFFKVAPYYYYPGWWEGGPTVHFMFNKSAYEGLTPTYQSLLRTACHAADANMLQLYDWKNPTAIKSLVAQGTQLRPFSPEILQACFEAANEVYAEMEASNPAFKKIWDSIKAFRSEHYTWAQIAEYNYDTFMMVQQNAGKL.

A signal peptide (tat-type signal) is located at residues methionine 1–alanine 26. Substrate is bound by residues tyrosine 99 to tyrosine 100, glutamine 156, and arginine 177. Glutamine 156 is a binding site for Na(+). 3 residues coordinate Na(+): glutamate 214, tryptophan 215, and glutamate 240.

It belongs to the bacterial solute-binding protein 7 family. In terms of assembly, homodimer. The complex comprises the extracytoplasmic solute receptor protein TakP, and the two transmembrane proteins TakQ and TakM. In terms of processing, predicted to be exported by the Tat system. The position of the signal peptide cleavage has not been experimentally proven.

It localises to the periplasm. Part of the tripartite ATP-independent periplasmic (TRAP) transport system TakPQM involved in the uptake of alpha-keto acids. This protein specifically binds alpha-keto acids including pyruvate, oxobutyrate, oxovalerate and 4-methyl-2-oxovalerate. Ligand-binding affinity increases with the increasing chain length of the aliphatic backbone of the ligand. Is not able to bind alpha-ketoglutarate. The sequence is that of Alpha-keto acid-binding periplasmic protein TakP from Cereibacter sphaeroides (strain ATCC 17023 / DSM 158 / JCM 6121 / CCUG 31486 / LMG 2827 / NBRC 12203 / NCIMB 8253 / ATH 2.4.1.) (Rhodobacter sphaeroides).